A 424-amino-acid chain; its full sequence is Enolase (424 aa).

Gln162 contributes to the (2R)-2-phosphoglycerate binding site. Catalysis depends on Glu204, which acts as the Proton donor. Asp241, Glu284, and Asp311 together coordinate Mg(2+). Residues Lys336, Arg365, Ser366, and Lys387 each coordinate (2R)-2-phosphoglycerate. Lys336 functions as the Proton acceptor in the catalytic mechanism.

Belongs to the enolase family. Mg(2+) is required as a cofactor.

The protein resides in the cytoplasm. Its subcellular location is the secreted. It is found in the cell surface. It catalyses the reaction (2R)-2-phosphoglycerate = phosphoenolpyruvate + H2O. The protein operates within carbohydrate degradation; glycolysis; pyruvate from D-glyceraldehyde 3-phosphate: step 4/5. Functionally, catalyzes the reversible conversion of 2-phosphoglycerate (2-PG) into phosphoenolpyruvate (PEP). It is essential for the degradation of carbohydrates via glycolysis. The protein is Enolase of Rhizobium johnstonii (strain DSM 114642 / LMG 32736 / 3841) (Rhizobium leguminosarum bv. viciae).